We begin with the raw amino-acid sequence, 565 residues long: MKATQTLIATTKELPKEAVLISHQYMLKAGLIKKLASGIYTWMPLGLKVLQKIQNIVRDEMNKAGASELLLPSILPSELLQETHRWDKFGPELLKLHDRHNRDFCYGPTHEEPIVDMARDTIKSYKQLPLNLYQIQTKFRDEIRPRFGVMRAREFIMKDAYSFHENSQCLRNTYNTMYATYCNILDKIGLAYRPVKADTGAIGGDNSHEFQVLANAGEDIICYSNGSDYAANIELATYAKPDLSKRVNSQNTIEKIHTPNIKTIEKLCKEMSFDIKKTIKTMVIKDAEGNFFALVIRGDHELNETKINKLEQIVAPYTLATKEEIFSIFNANPGSLGIYNCPISIIADYSAIAIIDLVCGANQDDYHFTNVNWDRDVTNYQIADIRNVVTGDISPDGKGTLELTNGIEVGHIFELEDVYSKPMNANIIGQDGKSKPMLMGCYGFGVSRVMAAAIEQSHDENGIIWPESIAPYQVAILPINYNKSDKVKEVADKLYQDLLGDGIDVLLDDRGARPGVMFADADLIGYSHHVVIGDRLLEQGLIEYKNRKTQEKQEITITELIKILT.

Belongs to the class-II aminoacyl-tRNA synthetase family. ProS type 1 subfamily. In terms of assembly, homodimer.

The protein resides in the cytoplasm. The catalysed reaction is tRNA(Pro) + L-proline + ATP = L-prolyl-tRNA(Pro) + AMP + diphosphate. Catalyzes the attachment of proline to tRNA(Pro) in a two-step reaction: proline is first activated by ATP to form Pro-AMP and then transferred to the acceptor end of tRNA(Pro). As ProRS can inadvertently accommodate and process non-cognate amino acids such as alanine and cysteine, to avoid such errors it has two additional distinct editing activities against alanine. One activity is designated as 'pretransfer' editing and involves the tRNA(Pro)-independent hydrolysis of activated Ala-AMP. The other activity is designated 'posttransfer' editing and involves deacylation of mischarged Ala-tRNA(Pro). The misacylated Cys-tRNA(Pro) is not edited by ProRS. This is Proline--tRNA ligase from Francisella tularensis subsp. novicida (strain U112).